The following is a 257-amino-acid chain: UPF0246 protein Sbal223_3241 (257 aa).

Belongs to the UPF0246 family.

This is UPF0246 protein Sbal223_3241 from Shewanella baltica (strain OS223).